Consider the following 136-residue polypeptide: Small ribosomal subunit protein uS11c (136 aa).

The protein belongs to the universal ribosomal protein uS11 family. In terms of assembly, part of the 30S ribosomal subunit.

The protein resides in the plastid. The chain is Small ribosomal subunit protein uS11c from Epifagus virginiana (Beechdrops).